The chain runs to 566 residues: Membrane protein insertase YidC (566 aa).

Transmembrane regions (helical) follow at residues 3–23 (IKRIILYVIVALLAIALFNAW), 346–366 (GWLWPISMLLFWILSAVHAVV), 369–389 (WGWSIIITTILIKIVFYWFSA), 436–456 (GGCLPMLIQVPVFIAFYYVII), and 509–529 (MWILPVIFTVFFINFPAGLVL).

It belongs to the OXA1/ALB3/YidC family. Type 1 subfamily. Interacts with the Sec translocase complex via SecD. Specifically interacts with transmembrane segments of nascent integral membrane proteins during membrane integration.

It localises to the cell inner membrane. Its function is as follows. Required for the insertion and/or proper folding and/or complex formation of integral membrane proteins into the membrane. Involved in integration of membrane proteins that insert both dependently and independently of the Sec translocase complex, as well as at least some lipoproteins. Aids folding of multispanning membrane proteins. This chain is Membrane protein insertase YidC, found in Coxiella burnetii (strain RSA 331 / Henzerling II).